Here is a 681-residue protein sequence, read N- to C-terminus: DNA-directed RNA polymerase subunit beta' (681 aa).

The Zn(2+) site is built by Cys-69, Cys-71, Cys-87, and Cys-90. The Mg(2+) site is built by Asp-489, Asp-491, and Asp-493.

Belongs to the RNA polymerase beta' chain family. RpoC1 subfamily. In plastids the minimal PEP RNA polymerase catalytic core is composed of four subunits: alpha, beta, beta', and beta''. When a (nuclear-encoded) sigma factor is associated with the core the holoenzyme is formed, which can initiate transcription. Requires Mg(2+) as cofactor. Zn(2+) is required as a cofactor.

Its subcellular location is the plastid. The protein localises to the chloroplast. It catalyses the reaction RNA(n) + a ribonucleoside 5'-triphosphate = RNA(n+1) + diphosphate. Functionally, DNA-dependent RNA polymerase catalyzes the transcription of DNA into RNA using the four ribonucleoside triphosphates as substrates. This is DNA-directed RNA polymerase subunit beta' from Anthoceros angustus (Hornwort).